A 607-amino-acid polypeptide reads, in one-letter code: CUB and zona pellucida-like domain-containing protein 1 (607 aa).

Residues 1-19 form the signal peptide; the sequence is MEVTGRLFIWAILAVSCGA. Cysteines 17 and 58 form a disulfide. 2 CUB domains span residues 20–146 and 154–265; these read QLNS…YFFS and CGGD…YTSI. At 20–568 the chain is on the lumenal side; the sequence is QLNSTEAEGK…AEISNQPLSR (549 aa). N22, N57, and N67 each carry an N-linked (GlcNAc...) asparagine glycan. 3 disulfide bridges follow: C85–C107, C154–C180, and C207–C229. Positions 276–519 constitute a ZP domain; sequence SCVSDKMRVI…SRCNQGCVPR (244 aa). An N-linked (GlcNAc...) asparagine glycan is attached at N419. C442 and C498 are oxidised to a cystine. A helical transmembrane segment spans residues 569–589; the sequence is LYLFSFMVLALNVVIVAITTV. The Cytoplasmic segment spans residues 590–607; sequence KHFLNRWMDHRYQKLQVY.

Highly expressed in pancreatic acinar cells. Also expressed in epithelium of the uterus during late pregnancy but not detected in non-pregnant uterus or in a variety of other adult and fetal tissues.

Its subcellular location is the zymogen granule membrane. Functionally, localized to zymogen granules, where it functions in trypsinogen activation. May indirectly regulate cell motility, cell-cell and cell/extracellular matrix interactions. This chain is CUB and zona pellucida-like domain-containing protein 1, found in Mus musculus (Mouse).